The following is a 270-amino-acid chain: Proteasome subunit alpha type-1 (270 aa).

The interval 239–270 (SMEAAEEAPAAEAESSSMQEEDKGTDAAPMDI) is disordered. The span at 245 to 256 (EAPAAEAESSSM) shows a compositional bias: low complexity.

Belongs to the peptidase T1A family. In terms of assembly, the 26S proteasome consists of a 20S proteasome core and two 19S regulatory subunits. The 20S proteasome core is composed of 28 subunits that are arranged in four stacked rings, resulting in a barrel-shaped structure. The two end rings are each formed by seven alpha subunits, and the two central rings are each formed by seven beta subunits. The catalytic chamber with the active sites is on the inside of the barrel.

Its subcellular location is the cytoplasm. The protein resides in the nucleus. Its function is as follows. The proteasome is a multicatalytic proteinase complex which is characterized by its ability to cleave peptides with Arg, Phe, Tyr, Leu, and Glu adjacent to the leaving group at neutral or slightly basic pH. The proteasome has an ATP-dependent proteolytic activity. This Oryza sativa subsp. japonica (Rice) protein is Proteasome subunit alpha type-1 (PAF1).